Consider the following 314-residue polypeptide: uncharacterized protein (314 aa).

Basic residues-rich tracts occupy residues 1–16 (MAGN…KAGT) and 49–65 (AAKR…RRPA). Residues 1–73 (MAGNSKRRGA…PARKTDETEL (73 aa)) form a disordered region. 3 residues coordinate S-adenosyl-L-methionine: glycine 266, isoleucine 286, and leucine 295.

It belongs to the class IV-like SAM-binding methyltransferase superfamily. RNA methyltransferase TrmH family.

This is an uncharacterized protein from Mycobacterium sp. (strain KMS).